The following is a 189-amino-acid chain: MSIKSDRWIKRMAEQHAMIEPFEPGQVKHDAAGQRIVSFGTSSYGYDVRCSREFKVFTNINSTIVDPKHFDPGSFVDIESDVCIIPPNSFALARTVEYFRIPRDTLVVCLGKSTYARCGIIVNVTPLEPEWEGHVTLEFSNTTPLPARIYANEGVAQMLFFQSDEVCETSYKDRGGKYQGQTGVTLPRT.

Residues 112-117, 136-138, Gln-157, Tyr-171, and Gln-181 contribute to the dCTP site; these read KSTYAR and TLE. The Proton donor/acceptor role is filled by Glu-138.

Belongs to the dCTP deaminase family. In terms of assembly, homotrimer.

It carries out the reaction dCTP + H2O + H(+) = dUTP + NH4(+). It functions in the pathway pyrimidine metabolism; dUMP biosynthesis; dUMP from dCTP (dUTP route): step 1/2. Functionally, catalyzes the deamination of dCTP to dUTP. This is dCTP deaminase from Xanthomonas euvesicatoria pv. vesicatoria (strain 85-10) (Xanthomonas campestris pv. vesicatoria).